The primary structure comprises 295 residues: MSIWAIGDLQGCYDATQRLLENIRFDPSQDTLWFCGDLVNRGGQSLETLRLVHSLRSHSVVVLGNHDLSLLAVTVRSEEEQRKVNPDLLRIITAEDRDEILTWLRMQKLIHVDRTIGWMMVHAGLAPKWTTQMAEKLAHEVEQQLHGTDYRKLLHSMYGDKPEWSPALSGCNRSRAIINVLTRMRYCTPRGRISTEDKGTPGTQTQGMYPWFEVPGRVERDLKIVCGHWSTLGLTITQGIHAIDTGAVWGGKLTALQIDTDELRLAQVHGLSIEHPRHTHTPRRKAKKRHKRSPK.

A disordered region spans residues Leu-271–Lys-295. The segment covering Arg-277–Lys-295 has biased composition (basic residues).

The protein belongs to the Ap4A hydrolase family.

The enzyme catalyses P(1),P(4)-bis(5'-adenosyl) tetraphosphate + H2O = 2 ADP + 2 H(+). In terms of biological role, hydrolyzes diadenosine 5',5'''-P1,P4-tetraphosphate to yield ADP. The protein is Bis(5'-nucleosyl)-tetraphosphatase, symmetrical of Xylella fastidiosa (strain M23).